Consider the following 863-residue polypeptide: MSRFFRGGDDSSSESSSDEEELYSTSEEEEEEDQDQEESSEEEDEEESSDEDEGPKKTGLSRFLVDQASSDSEGSDEEGATKVKSAKDKRFDELEATITTIQNRQKIDDWGSIANEFDKLNRQVVKLQDGGKAPKSYIKCIAELEDFLNETLAKQKVTPKNKKLNATNARGLNAVKQRIKKNNKDYQAQIDAFRKDSDDFMESDEEEVPAPKTKVRFQEAAAPEEAAEDEDKGFARVDKRGKAIPFSPESIQKHLRAIVESRGRKNTDRGEQIKIMEELNKVAETPYLKIRVLQTLVSARFDLGSGTTTSMPLDHWKAAERELAALLTLLETHKDHVVIEGAEEWEDDDKTPILGPDDKYIKVPGSVVSYIERLDDELTRSLQSIDPHTSEYIERLTDEASLYNIILQGLLYYETIRKDASLEIPQESLNRIIQRRLDHVYFKPAQVVKILEENAWKQVSSGVDSAITPRGASGDAGKLMYTLCNYLFDNSEGIIRARAMLSQIYFLALHDEYYKARDMMLTSHLQESIANFDVATQILYNRTLVQVGLCAFRRGLVYDAQNTLQDICGSGRQKELLAQGVMMQRYNQVTPEQERLEKQRQLPFHMHINLELLECVYLTCSMLLEIPLLAQIGSSPDIKKRVISKTYRRMLEYHERQIFTGPPENTRDHVMQASKALAAGEWKKATHFIHSIKIWDLMPSSEEIKAMLAKQIQEEGLRTYLFTYAPFYDTLAIETLSTMFELDSVKVSAVVSKMISHEELAAALDQVTKTVIFRKGVELSRLQSLALALSDKASALIETNERTLEVRTQGSANAFSRKDGRQGGQRGGGQRSGRGGARAGGNAQRQAGGTQFTGGALGAAVRG.

The interval 1–92 is disordered; it reads MSRFFRGGDD…VKSAKDKRFD (92 aa). The span at 16–53 shows a compositional bias: acidic residues; sequence SSDEEELYSTSEEEEEEDQDQEESSEEEDEEESSDEDE. Over residues 79 to 92 the composition is skewed to basic and acidic residues; it reads GATKVKSAKDKRFD. Residues 604 to 778 form the PCI domain; sequence FHMHINLELL…KTVIFRKGVE (175 aa). A disordered region spans residues 808–863; the sequence is TQGSANAFSRKDGRQGGQRGGGQRSGRGGARAGGNAQRQAGGTQFTGGALGAAVRG. Over residues 822-839 the composition is skewed to gly residues; the sequence is QGGQRGGGQRSGRGGARA. Residues 840 to 850 show a composition bias toward low complexity; that stretch reads GGNAQRQAGGT.

This sequence belongs to the eIF-3 subunit C family. In terms of assembly, component of the eukaryotic translation initiation factor 3 (eIF-3) complex.

The protein resides in the cytoplasm. Component of the eukaryotic translation initiation factor 3 (eIF-3) complex, which is involved in protein synthesis of a specialized repertoire of mRNAs and, together with other initiation factors, stimulates binding of mRNA and methionyl-tRNAi to the 40S ribosome. The eIF-3 complex specifically targets and initiates translation of a subset of mRNAs involved in cell proliferation. This Chaetomium globosum (strain ATCC 6205 / CBS 148.51 / DSM 1962 / NBRC 6347 / NRRL 1970) (Soil fungus) protein is Eukaryotic translation initiation factor 3 subunit C.